The chain runs to 357 residues: Fructose-1,6-bisphosphatase class 1 3 (357 aa).

4 residues coordinate Mg(2+): Glu94, Asp116, Leu118, and Asp119. Substrate is bound by residues Asp119 to Ser122 and Asn211. Glu283 serves as a coordination point for Mg(2+).

It belongs to the FBPase class 1 family. In terms of assembly, homotetramer. Requires Mg(2+) as cofactor.

It is found in the cytoplasm. The enzyme catalyses beta-D-fructose 1,6-bisphosphate + H2O = beta-D-fructose 6-phosphate + phosphate. Its pathway is carbohydrate biosynthesis; Calvin cycle. The chain is Fructose-1,6-bisphosphatase class 1 3 from Methylibium petroleiphilum (strain ATCC BAA-1232 / LMG 22953 / PM1).